An 882-amino-acid polypeptide reads, in one-letter code: Cadherin-1 (882 aa).

Positions 1–22 (MGPWSRSLSALLLLLQVSSWLC) are cleaved as a signal peptide. A propeptide spanning residues 23 to 154 (QEPEPCHPGF…SSSGLRRRKR (132 aa)) is cleaved from the precursor. The N-linked (GlcNAc...) asparagine glycan is linked to N144. 5 Cadherin domains span residues 155–262 (DWVI…KPEF), 263–375 (TQEV…PPVF), 376–486 (NPTT…APIF), 487–593 (VPPE…DNAP), and 594–697 (IPEP…VCKK). Residues 155–709 (DWVIPPISCP…PIEAGLQIPA (555 aa)) are Extracellular-facing. D257 provides a ligand contact to Ca(2+). Residue S280 is glycosylated (O-linked (Man...) serine). A glycan (O-linked (Man...) threonine) is linked at T285. D288 is a binding site for Ca(2+). Residues T358, T470, T472, and T509 are each glycosylated (O-linked (Man...) threonine). The N-linked (GlcNAc...) asparagine glycan is linked to N558. O-linked (Man...) threonine glycosylation is found at T576, T578, and T580. The N-linked (GlcNAc...) asparagine glycan is linked to N637. A helical membrane pass occupies residues 710–730 (ILGILGGILALLILILLLLLF). Residues 731-882 (LRRRAVVKEP…ADMYGGGEDD (152 aa)) are Cytoplasmic-facing. Residues 747–767 (DTRDNVYYYDEEGGGEEDQDF) form a disordered region. Y753, Y754, and Y755 each carry phosphotyrosine; by SRC. A compositionally biased stretch (acidic residues) spans 755-767 (YDEEGGGEEDQDF). The interval 758 to 769 (EGGGEEDQDFDL) is required for binding CTNND1 and PSEN1. A phosphoserine mark is found at S770, S793, S838, S840, and S846. The interval 811–882 (IDENLKAADT…ADMYGGGEDD (72 aa)) is required for binding alpha, beta and gamma catenins.

As to quaternary structure, homodimer; disulfide-linked. Component of an E-cadherin/ catenin adhesion complex composed of at least E-cadherin/CDH1, beta-catenin/CTNNB1 or gamma-catenin/JUP, and potentially alpha-catenin/CTNNA1; the complex is located to adherens junctions. Found in a complex composed of CDH1, RAP1A and PKP3; PKP3 acts as a scaffold protein within the complex, the complex is required for CDH1 localization to mature desmosome cell junctions. Interacts with the TRPV4 and CTNNB1 complex. Interacts with CTNND1. The stable association of CTNNA1 is controversial as CTNNA1 was shown not to bind to F-actin when assembled in the complex. Alternatively, the CTNNA1-containing complex may be linked to F-actin by other proteins such as LIMA1. Interaction with PSEN1, cleaves CDH1 resulting in the disassociation of cadherin-based adherens junctions (CAJs). Interacts with AJAP1 and DLGAP5. Interacts with TBC1D2. Interacts with LIMA1. Interacts with CAV1. Interacts with PIP5K1C. Interacts with RAB8B. Interacts with DDR1; this stabilizes CDH1 at the cell surface and inhibits its internalization. Interacts with RAPGEF2. Interacts with KLRG1. Forms a ternary complex composed of ADAM10, CADH1 and EPHA4; within the complex, CADH1 is cleaved by ADAM10 which disrupts adherens junctions. Interacts with SPEF1. Interacts with CTNNB1 and PKP2. Interacts with AMOTL2; the interaction may facilitate binding of radial actin fibers to cell junction complexes. Interacts with DSG3; the interaction is required for CDH1 localization to developing adherens junctions. In terms of processing, during apoptosis or with calcium influx, cleaved by a membrane-bound metalloproteinase (ADAM10), PS1/gamma-secretase and caspase-3. Processing by the metalloproteinase, induced by calcium influx, causes disruption of cell-cell adhesion and the subsequent release of beta-catenin into the cytoplasm. The residual membrane-tethered cleavage product is rapidly degraded via an intracellular proteolytic pathway. Cleavage by caspase-3 releases the cytoplasmic tail resulting in disintegration of the actin microfilament system. The gamma-secretase-mediated cleavage promotes disassembly of adherens junctions. During development of the cochlear organ of Corti, cleavage by ADAM10 at adherens junctions promotes pillar cell separation. N-glycosylation at Asn-637 is essential for expression, folding and trafficking. Addition of bisecting N-acetylglucosamine by MGAT3 modulates its cell membrane location. Post-translationally, ubiquitinated by a SCF complex containing SKP2, which requires prior phosphorylation by CK1/CSNK1A1. Ubiquitinated by CBLL1/HAKAI, requires prior phosphorylation at Tyr-754. In terms of processing, O-glycosylated. O-manosylated by TMTC1, TMTC2, TMTC3 or TMTC4. Thr-285 and Thr-509 are O-mannosylated by TMTC2 or TMTC4 but not TMTC1 or TMTC3.

It is found in the cell junction. It localises to the adherens junction. Its subcellular location is the cell membrane. The protein localises to the endosome. The protein resides in the golgi apparatus. It is found in the trans-Golgi network. It localises to the cytoplasm. Its subcellular location is the desmosome. Its function is as follows. Cadherins are calcium-dependent cell adhesion proteins. They preferentially interact with themselves in a homophilic manner in connecting cells; cadherins may thus contribute to the sorting of heterogeneous cell types. CDH1 is involved in mechanisms regulating cell-cell adhesions, mobility and proliferation of epithelial cells. Promotes organization of radial actin fiber structure and cellular response to contractile forces, via its interaction with AMOTL2 which facilitates anchoring of radial actin fibers to CDH1 junction complexes at the cell membrane. Plays a role in the early stages of desmosome cell-cell junction formation via facilitating the recruitment of DSG2 and DSP to desmosome plaques. Has a potent invasive suppressor role. It is a ligand for integrin alpha-E/beta-7. Functionally, E-Cad/CTF2 promotes non-amyloidogenic degradation of Abeta precursors. Has a strong inhibitory effect on APP C99 and C83 production. This chain is Cadherin-1 (CDH1), found in Pongo abelii (Sumatran orangutan).